The chain runs to 477 residues: Mitochondrial adenyl nucleotide antiporter SLC25A24 (477 aa).

Residues Met-1–Asp-174 form a regulatory N-terminal domain region. At Met-1–Gln-198 the chain is on the mitochondrial intermembrane side. One can recognise an EF-hand 1 domain in the interval Asp-20–Ser-55. 19 residues coordinate Ca(2+): Asp-33, Asn-35, Asp-37, Lys-39, Glu-44, Asp-69, Asp-71, Asp-73, Glu-80, Asp-100, Asn-102, Asp-104, Arg-106, Glu-111, Asp-136, Asp-138, Thr-140, Thr-142, and Glu-147. EF-hand domains are found at residues Glu-87 to Asn-122 and Leu-123 to Glu-158. Positions Leu-160–Lys-169 are linker region. Positions Ile-175–Lys-477 are C-terminal transmembrane transporter domain. Solcar repeat units lie at residues Gly-193–Leu-279, Val-287–Thr-372, and Pro-384–Gly-472. Residues Leu-199–Leu-216 form a helical membrane-spanning segment. At Asp-217–Arg-253 the chain is on the mitochondrial matrix side. Residues Gly-254–Tyr-273 form a helical membrane-spanning segment. The Mitochondrial intermembrane segment spans residues Glu-274 to Gly-296. A helical membrane pass occupies residues Ser-297–Met-310. Residues Glu-311–Lys-346 lie on the Mitochondrial matrix side of the membrane. The chain crosses the membrane as a helical span at residues Gly-347 to Tyr-366. Over Glu-367–Leu-389 the chain is Mitochondrial intermembrane. The helical transmembrane segment at Leu-390–Leu-407 threads the bilayer. Residues Ala-408–Arg-446 are Mitochondrial matrix-facing. Residues Gly-447 to Tyr-466 form a helical membrane-spanning segment. Over Glu-467–Lys-477 the chain is Mitochondrial intermembrane.

Belongs to the mitochondrial carrier (TC 2.A.29) family. As to quaternary structure, monomer.

It is found in the mitochondrion inner membrane. The enzyme catalyses Mg(2+)(out) + phosphate(in) + ATP(out) = Mg(2+)(in) + phosphate(out) + ATP(in). It catalyses the reaction ADP(out) + phosphate(in) + H(+)(out) = ADP(in) + phosphate(out) + H(+)(in). The catalysed reaction is AMP(out) + phosphate(in) = AMP(in) + phosphate(out). It carries out the reaction phosphate(in) + ATP(out) + 2 H(+)(out) = phosphate(out) + ATP(in) + 2 H(+)(in). The enzyme catalyses dADP(in) + ADP(out) = dADP(out) + ADP(in). It catalyses the reaction Mg(2+)(in) + ADP(out) + ATP(in) + H(+)(out) = Mg(2+)(out) + ADP(in) + ATP(out) + H(+)(in). The catalysed reaction is ADP(out) + diphosphate(in) = ADP(in) + diphosphate(out). It carries out the reaction dAMP(in) + ADP(out) + H(+)(out) = dAMP(out) + ADP(in) + H(+)(in). The enzyme catalyses 3'-AMP(in) + ADP(out) + H(+)(out) = 3'-AMP(out) + ADP(in) + H(+)(in). It catalyses the reaction dAMP(out) + phosphate(in) = dAMP(in) + phosphate(out). The catalysed reaction is 3'-AMP(out) + phosphate(in) = 3'-AMP(in) + phosphate(out). It carries out the reaction dADP(out) + phosphate(in) + H(+)(out) = dADP(in) + phosphate(out) + H(+)(in). Activated by an increase in cytosolic calcium levels that induce a conformational change of the N-terminal regulatory domain, uncapping the channel and allowing transport. Inhibited by bathophenanthroline, mersalyl, p-hydroxymercuribenzoate, bromcresol purple and tannic acid. Electroneutral antiporter that mediates the transport of adenyl nucleotides through the inner mitochondrial membrane. Originally identified as an ATP-magnesium/inorganic phosphate antiporter, it also acts as a broad specificity adenyl nucleotide antiporter. By regulating the mitochondrial matrix adenyl nucleotide pool could adapt to changing cellular energetic demands and indirectly regulate adenyl nucleotide-dependent metabolic pathways. The protein is Mitochondrial adenyl nucleotide antiporter SLC25A24 (slc25a24) of Danio rerio (Zebrafish).